The following is a 283-amino-acid chain: Pantothenate synthetase (283 aa).

Residue Met30 to His37 coordinates ATP. Residue His37 is the Proton donor of the active site. Residue Gln61 coordinates (R)-pantoate. A beta-alanine-binding site is contributed by Gln61. Gly149–Asp152 contacts ATP. Position 155 (Gln155) interacts with (R)-pantoate. Leu186–Arg189 contributes to the ATP binding site.

Belongs to the pantothenate synthetase family. In terms of assembly, homodimer.

The protein resides in the cytoplasm. The enzyme catalyses (R)-pantoate + beta-alanine + ATP = (R)-pantothenate + AMP + diphosphate + H(+). The protein operates within cofactor biosynthesis; (R)-pantothenate biosynthesis; (R)-pantothenate from (R)-pantoate and beta-alanine: step 1/1. Functionally, catalyzes the condensation of pantoate with beta-alanine in an ATP-dependent reaction via a pantoyl-adenylate intermediate. This is Pantothenate synthetase from Shigella flexneri serotype 5b (strain 8401).